The following is a 101-amino-acid chain: Putative pterin-4-alpha-carbinolamine dehydratase (101 aa).

Belongs to the pterin-4-alpha-carbinolamine dehydratase family.

The catalysed reaction is (4aS,6R)-4a-hydroxy-L-erythro-5,6,7,8-tetrahydrobiopterin = (6R)-L-erythro-6,7-dihydrobiopterin + H2O. The polypeptide is Putative pterin-4-alpha-carbinolamine dehydratase (Burkholderia mallei (strain ATCC 23344)).